The chain runs to 784 residues: Transcription factor E4F1 (784 aa).

Residues 41-85 are required for ubiquitin ligase activity; that stretch reads GFLGLPAPFSEEDEDDVHRCGRCQAEFTALEDFVQHKIQKACQRA. Position 50 is a phosphoserine (Ser50). A mediates dimerization, DNA-binding, transcription repression of CCNA2 and interaction with HMGA2 region spans residues 184–263; the sequence is LLVNKDGRYV…GKSFRESGAL (80 aa). C2H2-type zinc fingers lie at residues 192-214 and 220-242; these read YVCA…MVTH and HECK…HRRH. A C2H2-type 3; degenerate zinc finger spans residues 248–272; the sequence is YKCSKCGKSFRESGALTRHLKSLTP. Residues 369 to 566 form a mediates interaction with CDKN2A region; it reads NLLHQAMQNS…REKGSLVRHV (198 aa). 5 C2H2-type zinc fingers span residues 435–457, 463–485, 491–513, 519–541, and 547–569; these read HPCP…KRGH, FACA…QEVH, FRCG…RRVH, YPCP…FRTH, and HVCQ…VRHH. The tract at residues 435–599 is interaction with BMI1; sequence HPCPQCSETF…LNRHLRTKGG (165 aa). Positions 521–580 are mediates interaction with TP53; the sequence is CPKCGKRYKTKNAQQVHFRTHLEEKPHVCQFCSRGFREKGSLVRHVRHHTGEKPFKCYKC. A C2H2-type 9; degenerate zinc finger spans residues 575–597; the sequence is FKCYKCGRGFAEHGTLNRHLRTK. The tract at residues 575–597 is mediates interaction with RASSF1; it reads FKCYKCGRGFAEHGTLNRHLRTK.

Homodimer; binds DNA as a dimer. Forms a complex with CDKN2A and TP53. Interactions with TP53, RB1, ANP32A, BMI1 and FHL2 regulate E4F1 activity. Interacts with HDAC1, HMGA2 and RASSF1. In terms of assembly, (Microbial infection) Interacts with HBV protein X. Proteolytic cleavage produces a 50 kDa N-terminal peptide (p50E4F) which has a DNA-binding activity and activates transcription in presence of the adenoviral E1A protein. The major full-length protein (p120E4F) functions as a repressor of transcription. Post-translationally, phosphorylated; p120E4F and p50E4F are both phosphorylated. Phosphorylation is cell cycle-dependent and differentially regulates DNA-binding activity and function of both forms. In terms of processing, may be sumoylated by UBE2I upon interaction with CDKN2A. In terms of tissue distribution, ubiquitously expressed.

The protein resides in the nucleus. The protein localises to the nucleoplasm. Its subcellular location is the cytoplasm. The catalysed reaction is S-ubiquitinyl-[E2 ubiquitin-conjugating enzyme]-L-cysteine + [acceptor protein]-L-lysine = [E2 ubiquitin-conjugating enzyme]-L-cysteine + N(6)-ubiquitinyl-[acceptor protein]-L-lysine.. Its pathway is protein modification; protein ubiquitination. Its function is as follows. May function as a transcriptional repressor. May also function as a ubiquitin ligase mediating ubiquitination of chromatin-associated TP53. Functions in cell survival and proliferation through control of the cell cycle. Functions in the p53 and pRB tumor suppressor pathways and regulates the cyclin CCNA2 transcription. Identified as a cellular target of the adenoviral oncoprotein E1A, it is required for both transcriptional activation and repression of viral genes. The protein is Transcription factor E4F1 (E4F1) of Homo sapiens (Human).